The chain runs to 229 residues: Echinolectin 1 (229 aa).

N94 is a glycosylation site (N-linked (GlcNAc...) asparagine).

The protein localises to the secreted. In Echinometra lucunter (Rock-boring urchin), this protein is Echinolectin 1.